The sequence spans 258 residues: Large ribosomal subunit protein bL19m (258 aa).

Positions 235 to 258 (SKGLTGGVGGGGGKQKGQESKKKN) are disordered. Over residues 238-249 (LTGGVGGGGGKQ) the composition is skewed to gly residues.

The protein belongs to the bacterial ribosomal protein bL19 family. As to quaternary structure, component of the mitochondrial large ribosomal subunit (mt-LSU). Mature N.crassa 74S mitochondrial ribosomes consist of a small (37S) and a large (54S) subunit. The 37S small subunit contains a 16S ribosomal RNA (16S mt-rRNA) and 32 different proteins. The 54S large subunit contains a 23S rRNA (23S mt-rRNA) and 42 different proteins.

It is found in the mitochondrion. Component of the mitochondrial ribosome (mitoribosome), a dedicated translation machinery responsible for the synthesis of mitochondrial genome-encoded proteins, including at least some of the essential transmembrane subunits of the mitochondrial respiratory chain. The mitoribosomes are attached to the mitochondrial inner membrane and translation products are cotranslationally integrated into the membrane. The chain is Large ribosomal subunit protein bL19m (img1) from Neurospora crassa (strain ATCC 24698 / 74-OR23-1A / CBS 708.71 / DSM 1257 / FGSC 987).